The following is a 137-amino-acid chain: Probable calcium-binding protein CML33 (137 aa).

EF-hand domains follow at residues 1–36 (MNNM…LSPS), 37–72 (IPSE…TAQS), 76–111 (DVEK…LGEK), and 112–137 (CTVE…FVGV). Asp14, Ser16, Asp18, Lys20, and Glu25 together coordinate Ca(2+). Residues Asp89, Asn91, Asp93, Lys95, and Glu100 each coordinate Ca(2+).

Its function is as follows. Potential calcium sensor. The polypeptide is Probable calcium-binding protein CML33 (CML33) (Arabidopsis thaliana (Mouse-ear cress)).